A 400-amino-acid chain; its full sequence is Acetate kinase (400 aa).

Asparagine 10 is a Mg(2+) binding site. Lysine 17 lines the ATP pocket. A substrate-binding site is contributed by arginine 91. Catalysis depends on aspartate 150, which acts as the Proton donor/acceptor. ATP is bound by residues 210–214, 285–287, and 333–337; these read HLGNG, DCR, and GIGEN. Position 387 (glutamate 387) interacts with Mg(2+).

Belongs to the acetokinase family. Homodimer. The cofactor is Mg(2+). It depends on Mn(2+) as a cofactor.

The protein localises to the cytoplasm. It catalyses the reaction acetate + ATP = acetyl phosphate + ADP. It participates in metabolic intermediate biosynthesis; acetyl-CoA biosynthesis; acetyl-CoA from acetate: step 1/2. Its function is as follows. Catalyzes the formation of acetyl phosphate from acetate and ATP. Can also catalyze the reverse reaction. This chain is Acetate kinase, found in Pectobacterium carotovorum subsp. carotovorum (strain PC1).